The following is a 545-amino-acid chain: Glucose-6-phosphate isomerase (545 aa).

Residue glutamate 351 is the Proton donor of the active site. Active-site residues include histidine 382 and lysine 510.

This sequence belongs to the GPI family.

Its subcellular location is the cytoplasm. The catalysed reaction is alpha-D-glucose 6-phosphate = beta-D-fructose 6-phosphate. Its pathway is carbohydrate biosynthesis; gluconeogenesis. The protein operates within carbohydrate degradation; glycolysis; D-glyceraldehyde 3-phosphate and glycerone phosphate from D-glucose: step 2/4. Functionally, catalyzes the reversible isomerization of glucose-6-phosphate to fructose-6-phosphate. The sequence is that of Glucose-6-phosphate isomerase from Shewanella oneidensis (strain ATCC 700550 / JCM 31522 / CIP 106686 / LMG 19005 / NCIMB 14063 / MR-1).